Consider the following 430-residue polypeptide: Serine--tRNA ligase (430 aa).

231-233 (TSE) serves as a coordination point for L-serine. 262–264 (RSE) contacts ATP. Glu285 contributes to the L-serine binding site. An ATP-binding site is contributed by 349 to 352 (EISS). Ser385 is a binding site for L-serine.

It belongs to the class-II aminoacyl-tRNA synthetase family. Type-1 seryl-tRNA synthetase subfamily. Homodimer. The tRNA molecule binds across the dimer.

Its subcellular location is the cytoplasm. The catalysed reaction is tRNA(Ser) + L-serine + ATP = L-seryl-tRNA(Ser) + AMP + diphosphate + H(+). It catalyses the reaction tRNA(Sec) + L-serine + ATP = L-seryl-tRNA(Sec) + AMP + diphosphate + H(+). It functions in the pathway aminoacyl-tRNA biosynthesis; selenocysteinyl-tRNA(Sec) biosynthesis; L-seryl-tRNA(Sec) from L-serine and tRNA(Sec): step 1/1. Catalyzes the attachment of serine to tRNA(Ser). Is also able to aminoacylate tRNA(Sec) with serine, to form the misacylated tRNA L-seryl-tRNA(Sec), which will be further converted into selenocysteinyl-tRNA(Sec). This Jannaschia sp. (strain CCS1) protein is Serine--tRNA ligase.